A 76-amino-acid chain; its full sequence is U7-lycotoxin-Ls1c (76 aa).

Residues 1–22 (MKLIIFTGLALFLLVSLIDVEA) form the signal peptide. The propeptide occupies 23 to 26 (QNEG).

Belongs to the neurotoxin 19 (CSTX) family. 07 (U7-Lctx) subfamily. In terms of processing, contains 4 disulfide bonds. As to expression, expressed by the venom gland.

The protein resides in the secreted. The sequence is that of U7-lycotoxin-Ls1c from Lycosa singoriensis (Wolf spider).